A 354-amino-acid chain; its full sequence is Selenide, water dikinase (354 aa).

Cys-23 is an active-site residue. ATP-binding positions include Lys-26 and 54-56 (TSD). Asp-57 lines the Mg(2+) pocket. Residues Asp-74, Asp-97, and 145 to 147 (GHS) each bind ATP. Asp-97 is a binding site for Mg(2+). Residue Asp-233 coordinates Mg(2+).

Belongs to the selenophosphate synthase 1 family. Class I subfamily. Homodimer. The cofactor is Mg(2+).

The catalysed reaction is hydrogenselenide + ATP + H2O = selenophosphate + AMP + phosphate + 2 H(+). Functionally, synthesizes selenophosphate from selenide and ATP. The chain is Selenide, water dikinase from Burkholderia orbicola (strain MC0-3).